Consider the following 179-residue polypeptide: Inner membrane-spanning protein YciB (179 aa).

5 consecutive transmembrane segments (helical) span residues 3-23 (FLYD…FGIY), 49-69 (NALI…LWLQ), 76-96 (WKPT…QWLF), 119-139 (LNLA…YVAY), and 149-169 (FKLF…TLLL).

It belongs to the YciB family.

It localises to the cell inner membrane. Functionally, plays a role in cell envelope biogenesis, maintenance of cell envelope integrity and membrane homeostasis. The chain is Inner membrane-spanning protein YciB from Methylobacillus flagellatus (strain ATCC 51484 / DSM 6875 / VKM B-1610 / KT).